The following is a 464-amino-acid chain: ERO1-like protein alpha (464 aa).

Residues 1-23 form the signal peptide; the sequence is MGRGWGLLVGLLGVVWLLRSGQG. Cystine bridges form between Cys-35/Cys-48, Cys-37/Cys-46, Cys-85/Cys-387, Cys-94/Cys-99, Cys-94/Cys-130, Cys-99/Cys-104, Cys-207/Cys-237, and Cys-390/Cys-393. A phosphoserine mark is found at Ser-106, Ser-142, and Ser-144. FAD is bound by residues Arg-186, Thr-188, and Trp-199. FAD-binding residues include Ser-248 and His-251. The N-linked (GlcNAc...) asparagine glycan is linked to Asn-276. FAD-binding residues include Arg-283 and Arg-296. Asn-380 is a glycosylation site (N-linked (GlcNAc...) asparagine).

It belongs to the EROs family. As to quaternary structure, predominantly monomer. May function both as a monomer and a homodimer. Interacts with PDILT. Interacts with ERP44; the interaction results in retention of ERO1A in the endoplasmic reticulum. The cofactor is FAD. In terms of processing, N-glycosylated. Post-translationally, the Cys-94/Cys-99 and Cys-390/Cys-393 disulfide bonds constitute the redox-active center. The Cys-94/Cys-99 disulfide bond may accept electron from P4HB and funnel them to the active site disulfide Cys-390/Cys-393. The regulatory Cys-99/Cys-104 disulfide bond stabilizes the other regulatory bond Cys-94/Cys-130. Phosphorylated on Ser-144 by FAM20C in the Golgi which increases its enzymatic activity. Phosphorylation is induced by lactation. It is also induced by hypoxia and reductive stress.

The protein resides in the endoplasmic reticulum membrane. Its subcellular location is the golgi apparatus lumen. It is found in the secreted. The protein localises to the cell projection. It localises to the dendrite. Its activity is regulated as follows. Enzyme activity is tightly regulated to prevent the accumulation of reactive oxygen species in the endoplasmic reticulum. Reversibly down-regulated by the formation of disulfide bonds between the active site Cys-94 and Cys-130, and between Cys-99 and Cys-104. Glutathione may be required to regulate its activity in the endoplasmic reticulum. Functionally, oxidoreductase involved in disulfide bond formation in the endoplasmic reticulum. Efficiently reoxidizes P4HB/PDI, the enzyme catalyzing protein disulfide formation, in order to allow P4HB to sustain additional rounds of disulfide formation. Following P4HB reoxidation, passes its electrons to molecular oxygen via FAD, leading to the production of reactive oxygen species (ROS) in the cell. Required for the proper folding of immunoglobulins. Plays an important role in ER stress-induced, CHOP-dependent apoptosis by activating the inositol 1,4,5-trisphosphate receptor IP3R1. The sequence is that of ERO1-like protein alpha from Rattus norvegicus (Rat).